Reading from the N-terminus, the 358-residue chain is Chondroadherin (358 aa).

An N-terminal signal peptide occupies residues 1 to 20; it reads MARALLFSLVFLAILLPALA. Positions 21–50 constitute an LRRNT domain; the sequence is ACPQNCHCHGDLQHVICDKVGLQKIPKVSE. Cys-22 and Cys-37 are disulfide-bonded. 10 LRR repeats span residues 51–72, 75–96, 99–120, 123–144, 147–168, 171–192, 195–216, 219–240, 244–265, and 268–289; these read TTKLLNLQRNNFPVLAANSFRT, NLVSLHLQHCNIREVAAGAFRG, QLIYLYLSHNDIRVLRAGAFDD, ELTYLYLDHNKVSELPRGLLSP, NLFILQLNNNKIRELRAGAFQG, DLRWLYLSENALSSLQPGSLDD, NLAKFHLDKNQLSSYPSAALSK, VVEELKLSHNPLKSIPDNAFQS, YLETLWLDNTNLEKFSDAAFSG, and TLKHVHLDNNRLNQLPSSFPFD. A glycan (O-linked (GalNAc...) serine) is linked at Ser-143. Positions 299 to 347 constitute an LRRCT domain; sequence NPWKCTCQLRGLRRWLEAKASRPDATCSSPAKFKGQRIRDTDALRSCKS. 2 disulfides stabilise this stretch: Cys-303–Cys-345 and Cys-305–Cys-325. The interval 322–358 is disordered; it reads DATCSSPAKFKGQRIRDTDALRSCKSPTKRSKKAGRH. Basic residues predominate over residues 348–358; sequence PTKRSKKAGRH.

It belongs to the small leucine-rich proteoglycan (SLRP) family. SLRP class IV subfamily. Mostly monomeric. Interacts with collagen type II. In terms of tissue distribution, cartilage.

The protein resides in the secreted. Its subcellular location is the extracellular space. It localises to the extracellular matrix. Functionally, promotes attachment of chondrocytes, fibroblasts, and osteoblasts. This binding is mediated (at least for chondrocytes and fibroblasts) by the integrin alpha(2)beta(1). May play an important role in the regulation of chondrocyte growth and proliferation. The sequence is that of Chondroadherin (Chad) from Mus musculus (Mouse).